A 632-amino-acid chain; its full sequence is tRNA uridine 5-carboxymethylaminomethyl modification enzyme MnmG (632 aa).

FAD is bound by residues 15–20 (GAGHAG), Ile-127, and Ser-182. Position 276-290 (276-290 (GPRYCPSIEDKIVRF)) interacts with NAD(+). Position 373 (Gln-373) interacts with FAD.

The protein belongs to the MnmG family. Homodimer. Heterotetramer of two MnmE and two MnmG subunits. FAD serves as cofactor.

It is found in the cytoplasm. Functionally, NAD-binding protein involved in the addition of a carboxymethylaminomethyl (cmnm) group at the wobble position (U34) of certain tRNAs, forming tRNA-cmnm(5)s(2)U34. The chain is tRNA uridine 5-carboxymethylaminomethyl modification enzyme MnmG from Streptococcus pyogenes serotype M1.